A 102-amino-acid polypeptide reads, in one-letter code: Small ribosomal subunit protein uS10 (102 aa).

The protein belongs to the universal ribosomal protein uS10 family. As to quaternary structure, part of the 30S ribosomal subunit.

In terms of biological role, involved in the binding of tRNA to the ribosomes. In Leuconostoc citreum (strain KM20), this protein is Small ribosomal subunit protein uS10.